The sequence spans 194 residues: Fe/S biogenesis protein NfuA (194 aa).

Positions 152 and 155 each coordinate [4Fe-4S] cluster.

This sequence belongs to the NfuA family. In terms of assembly, homodimer. The cofactor is [4Fe-4S] cluster.

Involved in iron-sulfur cluster biogenesis. Binds a 4Fe-4S cluster, can transfer this cluster to apoproteins, and thereby intervenes in the maturation of Fe/S proteins. Could also act as a scaffold/chaperone for damaged Fe/S proteins. This chain is Fe/S biogenesis protein NfuA, found in Pseudomonas entomophila (strain L48).